We begin with the raw amino-acid sequence, 365 residues long: A-type ATP synthase subunit C (365 aa).

Belongs to the V-ATPase V0D/AC39 subunit family. As to quaternary structure, has multiple subunits with at least A(3), B(3), C, D, E, F, H, I and proteolipid K(x).

The protein resides in the cell membrane. Its function is as follows. Component of the A-type ATP synthase that produces ATP from ADP in the presence of a proton gradient across the membrane. The polypeptide is A-type ATP synthase subunit C (Thermococcus kodakarensis (strain ATCC BAA-918 / JCM 12380 / KOD1) (Pyrococcus kodakaraensis (strain KOD1))).